The chain runs to 373 residues: Glutamine synthetase (373 aa).

The residue at position 2 (Ala-2) is an N-acetylalanine. The required for glutamine-induced ubiquitination by CRL4(CRBN) and proteasomal degradation stretch occupies residues 2–25 (ATSASSHLNKGIKQMYMSLPQGEK). N6-acetyllysine is present on residues Lys-11 and Lys-14. A GS beta-grasp domain is found at 24–106 (EKVQAMYIWV…VLCEVFKYNR (83 aa)). Position 104 is a phosphotyrosine (Tyr-104). The GS catalytic domain maps to 113 to 373 (LRHICKRIMD…TGDEPFQYKN (261 aa)). Residue Glu-134 coordinates ATP. Positions 134, 136, 196, and 203 each coordinate Mn(2+). 203–208 (EFQIGP) is an ATP binding site. 246 to 247 (NW) is an L-glutamate binding site. Position 253 (His-253) interacts with Mn(2+). Residues 255–257 (NFS), Arg-319, and Arg-324 contribute to the ATP site. Residue Arg-319 coordinates L-glutamate. Position 336–338 (336–338 (YFE)) interacts with ADP. Glu-338 serves as a coordination point for Mn(2+). Arg-340 is a binding site for L-glutamate. Position 343 is a phosphoserine (Ser-343).

Belongs to the glutamine synthetase family. Decamer; composed of two pentamers. Interacts with PALMD. Interacts with RHOJ. Interacts with BEST2; this interaction tethers a fraction of GLUL to the membrane, causing a decrease of cytosolic glutamine synthase (GS) activity and inhibits the chloride channel activity of BEST2 by affecting the gating at the aperture in the absence of intracellular glutamate. Requires Mg(2+) as cofactor. It depends on Mn(2+) as a cofactor. Post-translationally, acetylated by EP300/p300; acetylation is stimulated by increased glutamine levels and promotes ubiquitin-mediated proteasomal degradation. In terms of processing, palmitoylated; undergoes autopalmitoylation. Ubiquitinated by ZNRF1. Ubiquitinated by the DCX (DDB1-CUL4-X-box) E3 ubiquitin-protein ligase complex called CRL4(CRBN), leading to proteasomal degradation. Expressed in microvascular endothelial cells.

The protein resides in the cytoplasm. It is found in the cytosol. The protein localises to the microsome. Its subcellular location is the mitochondrion. It localises to the cell membrane. It carries out the reaction L-glutamate + NH4(+) + ATP = L-glutamine + ADP + phosphate + H(+). It catalyses the reaction L-cysteinyl-[protein] + hexadecanoyl-CoA = S-hexadecanoyl-L-cysteinyl-[protein] + CoA. With respect to regulation, glutamine synthetase activity is inhibited by methionine sulfoximine (MSO). Glutamine synthetase that catalyzes the ATP-dependent conversion of glutamate and ammonia to glutamine. Its role depends on tissue localization: in the brain, it regulates the levels of toxic ammonia and converts neurotoxic glutamate to harmless glutamine, whereas in the liver, it is one of the enzymes responsible for the removal of ammonia. Plays a key role in ammonium detoxification during erythropoiesis: the glutamine synthetase activity is required to remove ammonium generated by porphobilinogen deaminase (HMBS) during heme biosynthesis to prevent ammonium accumulation and oxidative stress. Essential for proliferation of fetal skin fibroblasts. Independently of its glutamine synthetase activity, required for endothelial cell migration during vascular development. Involved in angiogenesis by regulating membrane localization and activation of the GTPase RHOJ, possibly by promoting RHOJ palmitoylation. May act as a palmitoyltransferase for RHOJ: able to autopalmitoylate and then transfer the palmitoyl group to RHOJ. Plays a role in ribosomal 40S subunit biogenesis. Through the interaction with BEST2, inhibits BEST2 channel activity by affecting the gating at the aperture in the absence of intracellular L-glutamate, but sensitizes BEST2 to intracellular L-glutamate, which promotes the opening of BEST2 and thus relieves its inhibitory effect on BEST2. This Mus musculus (Mouse) protein is Glutamine synthetase.